Here is a 568-residue protein sequence, read N- to C-terminus: Phosphoprotein (568 aa).

The disordered stretch occupies residues 1 to 24 (MDQDAFFFERDPEAEGEAPRKQES). Basic and acidic residues predominate over residues 7 to 24 (FFERDPEAEGEAPRKQES). The tract at residues 33–41 (DVVLSYKPT) is N0 binding. The segment at 45–324 (EDRSWLHGII…ANEEETSNTS (280 aa)) is disordered. Composition is skewed to basic and acidic residues over residues 56-105 (NPKE…HARI), 132-144 (RNTR…PNER), and 151-167 (LTDE…KREE). Over residues 190–208 (RTNNNGRSMETSSTHSTRI) the composition is skewed to polar residues. Residues 239 to 253 (TRSERTQNSELHKST) show a composition bias toward basic and acidic residues. The span at 294–305 (YTMNNANNNTKS) shows a compositional bias: polar residues. The interval 344–411 (FELSRSASHV…SSRDLHKRFS (68 aa)) is multimerization. A coiled-coil region spans residues 387–416 (EENRTLLKQIQEEINSSRDLHKRFSEYQKE). The tract at residues 412 to 445 (EYQKEQNSLMMANLSTLHIITDRGGKTGDPSDTT) is l protein binding. Residues 434–455 (RGGKTGDPSDTTRSPSVFTKGK) are disordered. The span at 441 to 450 (PSDTTRSPSV) shows a compositional bias: polar residues. The segment at 479-568 (DLIREDELRD…FEEDIDSLTN (90 aa)) is interaction with the nucleocapsid (N-RNA).

This sequence belongs to the respirovirus P protein family. In terms of assembly, homotetramer. Interacts (via multimerization domain) with polymerase L; this interaction forms the polymerase complex. Interacts (via N-terminus) with N0; this interaction allows P to chaperon N0 before encapsidation and form the N-P complex. Interacts (via C-terminus) with N-RNA template; this interaction positions the polymerase on the template.

Functionally, essential cofactor of the RNA polymerase L that plays a central role in the transcription and replication by forming the polymerase complex with RNA polymerase L and recruiting L to the genomic N-RNA template for RNA synthesis. Also plays a central role in the encapsidation of nascent RNA chains by forming the encapsidation complex with the nucleocapsid protein N (N-P complex). Acts as a chaperone for newly synthesized free N protein, so-called N0, allowing encapsidation of nascent RNA chains during replication. The nucleoprotein protein N prevents excessive phosphorylation of P, which leads to down-regulation of viral transcription/ replication. Participates, together with N, in the formation of viral factories (viroplasms), which are large inclusions in the host cytoplasm where replication takes place. Recruits host PI4KB and remodel the host endoplasmic reticulum membrane to form viral replication factories. This chain is Phosphoprotein (P/C), found in Human parainfluenza 1 virus (strain C35) (HPIV-1).